A 332-amino-acid chain; its full sequence is Flotillin-like protein FloA (332 aa).

The helical transmembrane segment at 9–29 (FILIGGGIIFVVLFFHYVPFF) threads the bilayer.

The protein belongs to the flotillin-like FloA family. As to quaternary structure, homooligomerizes.

Its subcellular location is the cell membrane. It is found in the membrane raft. Functionally, found in functional membrane microdomains (FMM) that may be equivalent to eukaryotic membrane rafts. FMMs are highly dynamic and increase in number as cells age. Flotillins are thought to be important factors in membrane fluidity. The chain is Flotillin-like protein FloA from Phocaeicola vulgatus (strain ATCC 8482 / DSM 1447 / JCM 5826 / CCUG 4940 / NBRC 14291 / NCTC 11154) (Bacteroides vulgatus).